Consider the following 1848-residue polypeptide: MQKKKSLNLLLALMMVFALVLPSIPALAATSSMSVEFYNSNKSAQTNSITPIIKITNTSDSDLNLNDVKVRYYYTSDGTQGQTFWCDHAGALLGNSYVDNTSKVTANFVKETASPTSTYDTYVEFGFASGRATLKKGQFITIQGRITKSDWSNYTQTNDYSFDASSSTPVVNPKVTGYIGGAKVLGTAPGPDVPSSIINPTSATFDKNVTKQADVKTTMTLNGNTFKTITDANGTALNASTDYSVSGNDVTISKAYLAKQSVGTTTLNFNFSAGNPQKLVITVVDTPVEAVTATIGKVQVNAGETVAVPVNLTKVPAAGLATIELPLTFDSASLEVVSITAGDIVLNPSVNFSSTVSGSTIKLLFLDDTLGSQLITKDGVFATITFKAKAITGTTAKVTSVKLAGTPVVGDAQLQEKPCAVNPGTVTINPIDNRMQISVGTATVKAGEIAAVPVTLTSVPSTGIATAEAQVSFDATLLEVASVTAGDIVLNPTVNFSYTVNGNVIKLLFLDDTLGSQLISKDGVFVTINFKAKAVTSTVTTPVTVSGTPVFADGTLAEVQSKTAAGSVTINIGDPILEPTISPVTATFDKKAPADVATTMTLNGYTFNGITGLTTSDYSISGNVVKISQAYLAKQPVGDLTLTFNFSNGNKTATAKLVVSIKDAPKTVTATVGTATVNAGETVAVPVTLSNVSGISTAELQLSFDATLLEVVSITAGDIVLNPSVNFSSVVNGSTIKLLFLDDTLGSQLISKDGVFATINFKAKSVTSTVTTPVKVSGTPVFADGTLAELSYETVAGSVTINAIGPVKTVTATVGTATVKSGETVAVPVTLSNVPGIATAELQLSFDATLLEVASITVGDIVLNPSVNFSSVVNGSTIKLLFLDDTLGSQLISKDGVLATINFKAKTVTSTVTTPVAVSGTPVFADGTLAELQSKTVAGSVTIEPSQPVKTVTATVGTATVKSGETVAVPVTLSNVPGIATAELQVGFDATLLEVASITVGDIVLNPSVNFSSVVNGSTIKLLFLDDTLGSQLISKDGVLATINFKAKTVTSKVTTPVAVSGTPVFADGTLAELNMKTVAGSVTIEPSQPVKTVTATVGTATVKSGETVAVPVTLSNVPGIATAELQVGFDATLLEVASITVGDIVLNPSVNFSSVVNGSTIKLLFLDDTLGSQLISKDGVLATINFKAKTVTSKVTTPVAVSGTPVFADGTLAELKYETVAGSVTIEPSQPVKTVTATVGTATGKVGETVAVPVTLSNVPGIATAEVQVGFDATLLEVASITAGDIVLNPSVNFSSVVNGSTIKILFLDDTLGSQLISKDGVFATINFKIKAVPSTGTTPVAISGTPVFADGTLAEVQYKTVAGSVTIAAADIKAVKATVGTATGKAGDTVAVPVTLSNVSGIATVELQLSFDATLLEVASITAGDIVLNPSVNFSSVVNGSTIKILFLDDTLGSQLISKDGVFATVNFKVKSTATNSAVTPVTVSGTPVFADGTLAELKSESAAGRLTILPTVIIVDSTVAPTAVTFDKANQADAAITMTLNGNTFSAIKNGTATLVKGTDYTVSENVVTISKAYLAKQTGTVTLEFVFDKGNSAKVVVAVKEIQIVNSTITPVVATFEKTAAKQADVVVTMSLNGNTFSAIKNGTTTLVKGTDYTISGSTVTISKAYLATLADGSATLEFVFNQGASAKLRLTIVPAVVDPVVTDFAVKIDKVSAAAGSTVKVPVSLINVSKVGNVCVAEYKISFDSSVLTYVGTTAGTSIKNPAVNFSSQLNGNTITLLFFDNTIGNELITADGQFATIEFKVNAAATSGTTAEVKVATISSFADASLTEITKVATVNGSVKVS.

The first 28 residues, 1-28, serve as a signal peptide directing secretion; the sequence is MQKKKSLNLLLALMMVFALVLPSIPALA. The CBM3 domain maps to 29 to 190; the sequence is ATSSMSVEFY…GAKVLGTAPG (162 aa). 9 Cohesin domains span residues 291–428, 435–570, 668–801, 810–943, 952–1085, 1094–1227, 1236–1369, 1377–1511, and 1709–1847; these read VTAT…TVTI, MQIS…SVTI, VTAT…SVTI, VKAT…RLTI, and FAVK…SVKV.

Post-translationally, the N-terminus is blocked. Glycosylated.

The protein resides in the secreted. Its function is as follows. Binds to cellulose fibers and coordinates cellulase enzymes. This is Cellulose-binding protein A (cbpA) from Clostridium cellulovorans.